The following is a 209-amino-acid chain: Putative tripartite motif-containing protein 61 (209 aa).

The RING-type zinc-finger motif lies at 16 to 57 (CPICLDYLKDPVTISCGHNFCLSCIIMSWKDLHDSFPCPFCH). The B box-type zinc finger occupies 92–133 (EEKHVCKKHNQVLTFFCQKDLELLCPRCSLSTDHQHHCVWPI). Residues C97, H100, C119, and H125 each coordinate Zn(2+).

The chain is Putative tripartite motif-containing protein 61 (TRIM61) from Homo sapiens (Human).